Reading from the N-terminus, the 195-residue chain is Glycerol-3-phosphate acyltransferase 1 (195 aa).

The next 5 helical transmembrane spans lie at 6–26 (VILT…GHFL), 52–72 (LGIA…FLVV), 74–94 (LGLK…AVAG), 117–137 (LAVY…LTFL), and 168–188 (FGLG…ISLF).

This sequence belongs to the PlsY family. As to quaternary structure, probably interacts with PlsX.

It is found in the cell membrane. The catalysed reaction is an acyl phosphate + sn-glycerol 3-phosphate = a 1-acyl-sn-glycero-3-phosphate + phosphate. Its pathway is lipid metabolism; phospholipid metabolism. Functionally, catalyzes the transfer of an acyl group from acyl-phosphate (acyl-PO(4)) to glycerol-3-phosphate (G3P) to form lysophosphatidic acid (LPA). This enzyme utilizes acyl-phosphate as fatty acyl donor, but not acyl-CoA or acyl-ACP. The protein is Glycerol-3-phosphate acyltransferase 1 of Moorella thermoacetica (strain ATCC 39073 / JCM 9320).